Reading from the N-terminus, the 904-residue chain is HTH-type transcriptional regulator MalT (904 aa).

39–46 (CPAGYGKT) provides a ligand contact to ATP. The HTH luxR-type domain maps to 832–897 (ELIRTSPLTQ…EAVQQAQQLL (66 aa)). A DNA-binding region (H-T-H motif) is located at residues 856 to 875 (NDQIAGELAVAATTIKTHIR).

This sequence belongs to the MalT family. In terms of assembly, monomer in solution. Oligomerizes to an active state in the presence of the positive effectors ATP and maltotriose.

With respect to regulation, activated by ATP and maltotriose, which are both required for DNA binding. Its function is as follows. Positively regulates the transcription of the maltose regulon whose gene products are responsible for uptake and catabolism of malto-oligosaccharides. Specifically binds to the promoter region of its target genes, recognizing a short DNA motif called the MalT box. This chain is HTH-type transcriptional regulator MalT, found in Serratia proteamaculans (strain 568).